Reading from the N-terminus, the 316-residue chain is Beta-agarase (316 aa).

A signal peptide spans 1–18 (MKRKLFTICLASLQFACA). Residues 27 to 315 (YEWDIYPVPA…WIRVYTLVPE (289 aa)) form the GH16 domain. Substrate contacts are provided by residues Trp78, 87-97 (QRDHVSVSDGF), and 101-103 (RAS). The active-site Nucleophile is Glu167. Catalysis depends on Glu172, which acts as the Proton donor. Arg197 lines the substrate pocket.

This sequence belongs to the glycosyl hydrolase 16 family.

The catalysed reaction is Hydrolysis of (1-&gt;4)-beta-D-galactosidic linkages in agarose, giving the tetramer as the predominant product.. Cleaves the beta-1,4-linkages between beta-D-galactose and alpha-L-3,6-anhydro-galactose residues in agarose. Cleaves agarose in a random manner with retention of the anomeric-bond configuration, producing beta-anomers that give rise progressively to alpha-anomers when mutarotation takes place. The chain is Beta-agarase from Phocaeicola plebeius (strain DSM 17135 / JCM 12973 / CCUG 54634 / M2) (Bacteroides plebeius).